The chain runs to 444 residues: Methylenetetrahydrofolate--tRNA-(uracil-5-)-methyltransferase TrmFO (444 aa).

Residue 10–15 (GAGLAG) coordinates FAD.

This sequence belongs to the MnmG family. TrmFO subfamily. The cofactor is FAD.

The protein resides in the cytoplasm. The enzyme catalyses uridine(54) in tRNA + (6R)-5,10-methylene-5,6,7,8-tetrahydrofolate + NADH + H(+) = 5-methyluridine(54) in tRNA + (6S)-5,6,7,8-tetrahydrofolate + NAD(+). It catalyses the reaction uridine(54) in tRNA + (6R)-5,10-methylene-5,6,7,8-tetrahydrofolate + NADPH + H(+) = 5-methyluridine(54) in tRNA + (6S)-5,6,7,8-tetrahydrofolate + NADP(+). Catalyzes the folate-dependent formation of 5-methyl-uridine at position 54 (M-5-U54) in all tRNAs. The chain is Methylenetetrahydrofolate--tRNA-(uracil-5-)-methyltransferase TrmFO from Streptococcus pneumoniae (strain 70585).